The following is a 914-amino-acid chain: MEAIDELSQLSDSMKQAASLLADEDPDETSSSKRPATFLNVVALGNVGAGKSAVLNSLIGHPVLPTGENGATRAPIIIELSRESSLSSKAIILQIDNKSQQVSASALRHSLQDRLSKGASGKNRDEINLKLRTSTAPPLKLVDLPGLDQRIVDESMIAEYAQHNDAILLVIVPASQASEISSSRALKIAKEYDPESTRTIGIIGKIDQAAENSKALAAVQALLSNQGPPKTTDIPWVAVIGQSVSIASAQSGSGENSLETAWRAESESLKSILTGAPQSKLGRIALVDTLASQIRSRMKLRLPSVLSGLQGKSQIVQDELARLGEQLVNSAEGTRAIALELCREFEDKFLLHLAGGEGSGWKVVASFEGNFPNRIKQLPLDRHFDLNNVKRVVLEADGYQPYLISPEKGLRSLIKIVLELAKDPARLCVDEVHRVLVDIVSASANATPGLGRYPPFKREVVAIASAALDGFKNEAKKMVVALVDMERAFVPPQHFIRLVQRRMERQRREEELKGRSSKKGQDAEQSLLSRATSPQPDGPTAGGSLKSMKDKPSPQDKETPEVSGLKTAGPEGEITAGYLMKKSAKTNGWSRRWFVLNEKTGKLGYTKKQEERNFRGTITLEECTIEEIPEDEVEKSKSSKDKKANGPDSKGPGLVFKITCKVPYKTVLKAHNALVLKAESVVDKNEWINKLQKVIQARGGQVGSVSMRQSLSEGSLDKMVRKPIDPEEELRWMSQEVRGYVEAVLNSLAANVPKAVVLCQVEKAKEDMLNQLYSSISAIGNERIESLIQEDQNVKRRRERYQKQSSLLSKLTRQLSIHDNRAAAASSYSDNSGTESSPRASGGSSGDDWMNAFNSAANGPSDSLSKYGSGGHSRRYSDPAQNGDAASPGSGSNRRTTPNRLPPAPPPTGSAYRY.

M1 bears the N-acetylmethionine mark. The Dynamin-type G domain occupies 35-303; sequence PATFLNVVAL…IRSRMKLRLP (269 aa). Residues 45 to 52 are G1 motif; that stretch reads GNVGAGKS. A GTP-binding site is contributed by 45 to 52; that stretch reads GNVGAGKS. The interval 71–73 is G2 motif; the sequence is ATR. The interval 143-146 is G3 motif; that stretch reads DLPG. GTP contacts are provided by residues 143–147 and 204–207; these read DLPGL and GKID. Residues 204-207 form a G4 motif region; sequence GKID. Residues 238–241 form a G5 motif region; it reads AVIG. Over residues 507–522 the composition is skewed to basic and acidic residues; the sequence is RREEELKGRSSKKGQD. 2 disordered regions span residues 507-570 and 629-648; these read RREE…TAGP and PEDE…NGPD. Residues 523-535 are compositionally biased toward polar residues; the sequence is AEQSLLSRATSPQ. Composition is skewed to basic and acidic residues over residues 547–560 and 634–645; these read SMKD…KETP and EKSKSSKDKKAN. The 125-residue stretch at 572–696 folds into the PH domain; the sequence is GEITAGYLMK…WINKLQKVIQ (125 aa). The GED domain occupies 730–823; sequence LRWMSQEVRG…QLSIHDNRAA (94 aa). Residues 781–805 adopt a coiled-coil conformation; that stretch reads NERIESLIQEDQNVKRRRERYQKQS. A disordered region spans residues 821 to 914; sequence RAAAASSYSD…PPPTGSAYRY (94 aa). Polar residues-rich tracts occupy residues 826-839 and 852-866; these read SSYS…SSPR and AFNS…SLSK.

This sequence belongs to the TRAFAC class dynamin-like GTPase superfamily. Dynamin/Fzo/YdjA family. As to quaternary structure, binds PtdIns3P. Interacts with SH3P3 (via SH3 domain) and (via C-terminus) with GAMMA-ADR. May homooligomerize or heterooligomerize.

It is found in the cytoplasm. Its subcellular location is the cytosol. The protein localises to the golgi apparatus membrane. The protein resides in the cytoskeleton. It localises to the phragmoplast. It is found in the cytoplasmic vesicle. Its subcellular location is the clathrin-coated vesicle. The catalysed reaction is GTP + H2O = GDP + phosphate + H(+). Its activity is regulated as follows. Increased GTPase activity in the presence of phosphatidic acid. Functionally, microtubule-associated force-producing protein involved in clathrin-mediated vesicle trafficking from the trans-Golgi network to the central vacuole. Able to bind and hydrolyze GTP. Binds specifically to phosphatidylinositol 3-phosphate (PtdIns3P). The chain is Dynamin-2A (DRP2A) from Arabidopsis thaliana (Mouse-ear cress).